The chain runs to 445 residues: MTSASAPSFNPGKGPGSAVGIALLGFGTVGTEVMRLMTEYGDELAHRIGGPLEVRGIAVSDISKPREGVAPELLTEDAFALIEREDVDIVVEVIGGIEYPREVVLAALKAGKSVVTANKALVAAHSAELADAAEAANVDLYFEAAVAGAIPVVGPLRRSLAGDQIQSVMGIVNGTTNFILDAMDSTGADYADSLAEATRLGYAEADPTADVEGHDAASKAAILASIAFHTRVTADDVYCEGISNISAADIEAAQQAGHTIKLLAICEKFTNKEGKSAISARVHPTLLPVSHPLASVNKSFNAIFVEAEAAGRLMFYGNGAGGAPTASAVLGDVVGAARNKVHGGRAPGESTYANLPIADFGETTTRYHLDMDVEDRVGVLAELASLFSEQGISLRTIRQEERDDDARLIVVTHSALESDLSRTVELLKAKPVVKAINSVIRLERD.

NADPH-binding residues include Phe26, Thr28, and Val29. Val29 and Ala58 together coordinate NAD(+). Position 29 (Val29) interacts with NADP(+). An NADPH-binding site is contributed by Lys119. Position 119 (Lys119) interacts with NADP(+). Residues Glu143, Val146, Gly148, and Ile150 each coordinate Na(+). NADP(+) is bound by residues Gly201 and Glu204. Glu204 and Asp215 together coordinate L-homoserine. Lys219 serves as the catalytic Proton donor. An NADPH-binding site is contributed by Gly321. Residue Gly321 participates in NAD(+) binding. NADP(+) is bound at residue Gly321. The ACT domain occupies 368–445; sequence HLDMDVEDRV…INSVIRLERD (78 aa).

This sequence belongs to the homoserine dehydrogenase family. It depends on a metal cation as a cofactor.

It carries out the reaction L-homoserine + NADP(+) = L-aspartate 4-semialdehyde + NADPH + H(+). The enzyme catalyses L-homoserine + NAD(+) = L-aspartate 4-semialdehyde + NADH + H(+). Its pathway is amino-acid biosynthesis; L-methionine biosynthesis via de novo pathway; L-homoserine from L-aspartate: step 3/3. The protein operates within amino-acid biosynthesis; L-threonine biosynthesis; L-threonine from L-aspartate: step 3/5. Feedback inhibition by threonine. Catalyzes the conversion of L-aspartate-beta-semialdehyde (L-Asa) to L-homoserine (L-Hse), the third step in the biosynthesis of threonine and methionine from aspartate. The protein is Homoserine dehydrogenase (hom) of Corynebacterium glutamicum (strain ATCC 13032 / DSM 20300 / JCM 1318 / BCRC 11384 / CCUG 27702 / LMG 3730 / NBRC 12168 / NCIMB 10025 / NRRL B-2784 / 534).